An 884-amino-acid polypeptide reads, in one-letter code: Translation initiation factor IF-2 (884 aa).

Disordered stretches follow at residues 42 to 62 (DVQK…QEEV) and 123 to 254 (EPKG…GGKK). The span at 194–212 (PAERREVVIPPKRKMEERA) shows a compositional bias: basic and acidic residues. A compositionally biased stretch (low complexity) spans 234–248 (EPETPAGGAPGAKKG). The tr-type G domain maps to 384 to 553 (KRPPVVTIMG…LLQADVMDLK (170 aa)). The G1 stretch occupies residues 393-400 (GHVDHGKT). GTP is bound at residue 393–400 (GHVDHGKT). A G2 region spans residues 418–422 (GITQH). The segment at 439–442 (DTPG) is G3. Residues 439 to 443 (DTPGH) and 493 to 496 (NKID) contribute to the GTP site. A G4 region spans residues 493–496 (NKID). The segment at 529–531 (SAK) is G5.

It belongs to the TRAFAC class translation factor GTPase superfamily. Classic translation factor GTPase family. IF-2 subfamily.

Its subcellular location is the cytoplasm. In terms of biological role, one of the essential components for the initiation of protein synthesis. Protects formylmethionyl-tRNA from spontaneous hydrolysis and promotes its binding to the 30S ribosomal subunits. Also involved in the hydrolysis of GTP during the formation of the 70S ribosomal complex. The protein is Translation initiation factor IF-2 of Geobacter metallireducens (strain ATCC 53774 / DSM 7210 / GS-15).